Here is a 165-residue protein sequence, read N- to C-terminus: Phosphopantetheine adenylyltransferase (165 aa).

Substrate is bound at residue threonine 9. ATP is bound by residues 9–10 (TF) and histidine 17. Residues lysine 41, leucine 73, and arginine 87 each coordinate substrate. Residues 88–90 (GLR), glutamate 98, and 123–129 (YMFISAT) contribute to the ATP site.

This sequence belongs to the bacterial CoaD family. Homohexamer. Mg(2+) is required as a cofactor.

The protein localises to the cytoplasm. The enzyme catalyses (R)-4'-phosphopantetheine + ATP + H(+) = 3'-dephospho-CoA + diphosphate. It participates in cofactor biosynthesis; coenzyme A biosynthesis; CoA from (R)-pantothenate: step 4/5. Reversibly transfers an adenylyl group from ATP to 4'-phosphopantetheine, yielding dephospho-CoA (dPCoA) and pyrophosphate. In Nitrosospira multiformis (strain ATCC 25196 / NCIMB 11849 / C 71), this protein is Phosphopantetheine adenylyltransferase.